The sequence spans 299 residues: Tyrosine recombinase XerC (299 aa).

The region spanning 1–85 (MQADLDAFLD…ALRGFYRYLL (85 aa)) is the Core-binding (CB) domain. Residues 106–285 (RLPRTLDADR…DFQHLAAVYD (180 aa)) form the Tyr recombinase domain. Residues Arg146, Lys170, His237, Arg240, and His263 contribute to the active site. Tyr272 serves as the catalytic O-(3'-phospho-DNA)-tyrosine intermediate.

This sequence belongs to the 'phage' integrase family. XerC subfamily. In terms of assembly, forms a cyclic heterotetrameric complex composed of two molecules of XerC and two molecules of XerD.

Its subcellular location is the cytoplasm. Site-specific tyrosine recombinase, which acts by catalyzing the cutting and rejoining of the recombining DNA molecules. The XerC-XerD complex is essential to convert dimers of the bacterial chromosome into monomers to permit their segregation at cell division. It also contributes to the segregational stability of plasmids. This chain is Tyrosine recombinase XerC, found in Azotobacter vinelandii (strain DJ / ATCC BAA-1303).